A 464-amino-acid polypeptide reads, in one-letter code: UDP-N-acetylmuramate--L-alanine ligase (464 aa).

112 to 118 (GTHGKTT) contacts ATP.

The protein belongs to the MurCDEF family.

It localises to the cytoplasm. It carries out the reaction UDP-N-acetyl-alpha-D-muramate + L-alanine + ATP = UDP-N-acetyl-alpha-D-muramoyl-L-alanine + ADP + phosphate + H(+). Its pathway is cell wall biogenesis; peptidoglycan biosynthesis. Its function is as follows. Cell wall formation. The sequence is that of UDP-N-acetylmuramate--L-alanine ligase from Chromobacterium violaceum (strain ATCC 12472 / DSM 30191 / JCM 1249 / CCUG 213 / NBRC 12614 / NCIMB 9131 / NCTC 9757 / MK).